The chain runs to 450 residues: Tubulin alpha-5 chain (450 aa).

The GTP site is built by Gln11, Glu71, Gly144, Thr145, Thr179, Asn206, and Asn228. Residue Glu71 coordinates Mg(2+). Residue Glu254 is part of the active site.

This sequence belongs to the tubulin family. As to quaternary structure, dimer of alpha and beta chains. A typical microtubule is a hollow water-filled tube with an outer diameter of 25 nm and an inner diameter of 15 nM. Alpha-beta heterodimers associate head-to-tail to form protofilaments running lengthwise along the microtubule wall with the beta-tubulin subunit facing the microtubule plus end conferring a structural polarity. Microtubules usually have 13 protofilaments but different protofilament numbers can be found in some organisms and specialized cells. Mg(2+) serves as cofactor. Undergoes a tyrosination/detyrosination cycle, the cyclic removal and re-addition of a C-terminal tyrosine residue by the enzymes tubulin tyrosine carboxypeptidase (TTCP) and tubulin tyrosine ligase (TTL), respectively.

It is found in the cytoplasm. It localises to the cytoskeleton. It carries out the reaction GTP + H2O = GDP + phosphate + H(+). In terms of biological role, tubulin is the major constituent of microtubules, a cylinder consisting of laterally associated linear protofilaments composed of alpha- and beta-tubulin heterodimers. Microtubules grow by the addition of GTP-tubulin dimers to the microtubule end, where a stabilizing cap forms. Below the cap, tubulin dimers are in GDP-bound state, owing to GTPase activity of alpha-tubulin. This is Tubulin alpha-5 chain (TUBA5) from Zea mays (Maize).